The sequence spans 179 residues: Large ribosomal subunit protein uL5 (179 aa).

It belongs to the universal ribosomal protein uL5 family. Part of the 50S ribosomal subunit; part of the 5S rRNA/L5/L18/L25 subcomplex. Contacts the 5S rRNA and the P site tRNA. Forms a bridge to the 30S subunit in the 70S ribosome.

Functionally, this is one of the proteins that bind and probably mediate the attachment of the 5S RNA into the large ribosomal subunit, where it forms part of the central protuberance. In the 70S ribosome it contacts protein S13 of the 30S subunit (bridge B1b), connecting the 2 subunits; this bridge is implicated in subunit movement. Contacts the P site tRNA; the 5S rRNA and some of its associated proteins might help stabilize positioning of ribosome-bound tRNAs. This is Large ribosomal subunit protein uL5 from Geobacter sulfurreducens (strain ATCC 51573 / DSM 12127 / PCA).